Consider the following 139-residue polypeptide: Endoribonuclease YbeY (139 aa).

Zn(2+) contacts are provided by His-107, His-111, and Asp-117.

The protein belongs to the endoribonuclease YbeY family. The cofactor is Zn(2+).

Its subcellular location is the cytoplasm. Its function is as follows. Single strand-specific metallo-endoribonuclease involved in late-stage 70S ribosome quality control and in maturation of the 3' terminus of the 16S rRNA. The chain is Endoribonuclease YbeY from Bacteroides fragilis (strain ATCC 25285 / DSM 2151 / CCUG 4856 / JCM 11019 / LMG 10263 / NCTC 9343 / Onslow / VPI 2553 / EN-2).